A 329-amino-acid polypeptide reads, in one-letter code: Mas-related G-protein coupled receptor member X2 (329 aa).

Over 1–33 the chain is Extracellular; that stretch reads MDPTTPAWGTESTTMDGNDQSLPLLCDKEALIP. The chain crosses the membrane as a helical span at residues 34–54; it reads VFLILFIALVGLVGNGFVLWL. At 55 to 63 the chain is on the cytoplasmic side; that stretch reads LGFRMSRNA. The chain crosses the membrane as a helical span at residues 64–84; that stretch reads FSVYVLSLAGADFLFLCFQII. The Extracellular segment spans residues 85–96; the sequence is NCLVYLRDFFCS. The helical transmembrane segment at 97 to 117 threads the bilayer; sequence ISINFPSXFTTVMTCAYLAGL. Topologically, residues 118-144 are cytoplasmic; it reads SMLSTISTERCLSVLWPIWYRCRRPRH. Residues 145-165 form a helical membrane-spanning segment; it reads LSAVVCVLLWALSLLLSILEG. Residues 166-184 are Extracellular-facing; sequence KFCGFLFSDGDFGWCQIFD. Residues 185 to 205 form a helical membrane-spanning segment; that stretch reads FITAAWLIFLFVVLCASSLAL. Topologically, residues 206-228 are cytoplasmic; it reads LVRILCGSRGLPLTRLYLTILLT. The helical transmembrane segment at 229–249 threads the bilayer; sequence VLVFLLCGLPFGIQWFLILGF. Over 250–263 the chain is Extracellular; it reads WNSDVLLCHIHLVS. The helical transmembrane segment at 264 to 284 threads the bilayer; sequence VVLSSLNSSANPIIYFFVGSF. The Cytoplasmic segment spans residues 285 to 329; it reads RKQWRLQQPILKLAFQRALQDTAEVDHSEGCFPQGTSEMSRSSLV.

It belongs to the G-protein coupled receptor 1 family. Mas subfamily.

The protein resides in the cell membrane. In terms of biological role, mast cell-specific receptor for basic secretagogues, i.e. cationic amphiphilic drugs, as well as endo- or exogenous peptides, consisting of a basic head group and a hydrophobic core. Recognizes and binds small molecules containing a cyclized tetrahydroisoquinoline (THIQ), such as non-steroidal neuromuscular blocking drugs (NMBDs), including tubocurarine and atracurium. In response to these compounds, mediates pseudo-allergic reactions characterized by histamine release, inflammation and airway contraction. The polypeptide is Mas-related G-protein coupled receptor member X2 (MRGPRX2) (Hoolock hoolock (Western hoolock gibbon)).